Reading from the N-terminus, the 678-residue chain is Platelet endothelial cell adhesion molecule (678 aa).

A signal peptide spans 1–17; that stretch reads MLLALLLTMLLYASLQA. Over 18–589 the chain is Extracellular; it reads QENSFTINSI…VRVFLAPWKK (572 aa). Ig-like C2-type domains follow at residues 40–126, 135–213, 225–309, 315–391, 413–472, and 488–577; these read GQKL…PEVT, GGIV…FIRS, PKFQ…ILVN, PRPK…LVPV, GQII…NCHS, and PVDE…RSGP. Cysteines 47 and 99 form a disulfide. N-linked (GlcNAc...) asparagine glycans are attached at residues Asn-74 and Asn-141. Disulfide bonds link Cys-142/Cys-195 and Cys-245/Cys-293. Asn-309, Asn-345, Asn-360, Asn-424, and Asn-540 each carry an N-linked (GlcNAc...) asparagine glycan. Cystine bridges form between Cys-336–Cys-375, Cys-420–Cys-465, and Cys-512–Cys-561. The helical transmembrane segment at 590–610 threads the bilayer; sequence GLIAVVVIGVVIAALIVAAKY. Residues 611–678 lie on the Cytoplasmic side of the membrane; the sequence is YFLRKAKAKQ…EPHQENGRLP (68 aa). The interval 634-653 is disordered; sequence NSNSEKVSEPSVETNSHYDS. The ITIM motif signature appears at 658–663; the sequence is VEYTEV. Tyr-660 carries the phosphotyrosine; by FER modification.

In terms of assembly, trans-homodimer (via Ig-like C2-type 1 and Ig-like C2-type 2 domains); trans-homodimerization is required for cell-cell interaction. Forms a complex with BDKRB2 and GNAQ. Interacts with BDKRB2 and GNAQ. Interacts with PTPN11. Interacts with FER. Interacts with CD177; the interaction is Ca(2+)-dependent; the interaction is direct. Post-translationally, phosphorylated on Ser and Tyr residues after cellular activation. In endothelial cells Fyn mediates mechanical-force (stretch or pull) induced tyrosine phosphorylation. Phosphorylated on tyrosine residues by FER and FES in response to FCER1 activation. In terms of processing, palmitoylation by ZDHHC21 is necessary for cell surface expression in endothelial cells and enrichment in membrane rafts.

Its subcellular location is the cell membrane. It localises to the membrane raft. The protein resides in the cell junction. Cell adhesion molecule which is required for leukocyte transendothelial migration (TEM) under most inflammatory conditions. Tyr-660 plays a critical role in TEM and is required for efficient trafficking of PECAM1 to and from the lateral border recycling compartment (LBRC) and is also essential for the LBRC membrane to be targeted around migrating leukocytes. Trans-homophilic interaction may play a role in endothelial cell-cell adhesion via cell junctions. Heterophilic interaction with CD177 plays a role in transendothelial migration of neutrophils. Homophilic ligation of PECAM1 prevents macrophage-mediated phagocytosis of neighboring viable leukocytes by transmitting a detachment signal. Promotes macrophage-mediated phagocytosis of apoptotic leukocytes by tethering them to the phagocytic cells; PECAM1-mediated detachment signal appears to be disabled in apoptotic leukocytes. Modulates bradykinin receptor BDKRB2 activation. Regulates bradykinin- and hyperosmotic shock-induced ERK1/2 activation in endothelial cells. Induces susceptibility to atherosclerosis. In Rattus norvegicus (Rat), this protein is Platelet endothelial cell adhesion molecule (Pecam1).